Consider the following 191-residue polypeptide: Calcium and integrin-binding protein 1 (191 aa).

Residue Gly2 is the site of N-myristoyl glycine attachment. 2 EF-hand domains span residues 103–138 and 148–183; these read TPDIKSHYAFRIFDFDDDGTLNREDLSQLVNCLTGE and EMKQLIDNILEESDIDRDGTINLSEFQHVISRSPDF. Ca(2+)-binding residues include Asp116, Asp118, Asp120, Thr122, Asp127, Asp161, Asp163, Asp165, Thr167, and Glu172.

In terms of assembly, monomer. Interacts with the heterodimeric integrin alpha-IIb/beta3 (ITGA2B-ITGB3). Interacts with ITGA2B (via cytoplasmic domain); the interaction is direct and calcium-dependent. Interacts with the protein kinases PLK2/SNK and PRKDC (via the region immediately upstream of the kinase domain). Interacts with PLK3; the interaction inhibits PLK3 kinase activity. Interacts with PSEN2. Interacts (via C-terminus) with F8. Interacts with NBR1 (via C-terminus). Interacts with FEZ1 (via C-terminus). Interacts with UBR5 (via C-terminus); the interaction is sensitive to DNA damage, and may target CIB1 for ubiquitin-mediated degradation. Interacts with IFI6; the interaction is direct. Interacts with BCL2. Interacts with ITPR3; the interaction occurs in a calcium dependent manner. Interacts with PTK2/FAK1. Interacts with MAP3K5; the interaction inhibits MAP3K5 activation by phosphorylation, and its subsequent interaction with TRAF2. Interacts (via C-terminal region) with STMN2 (via the N-terminal region); the interaction is direct, occurs in a calcium-dependent manner and attenuates the STMN2-induced neurite outgrowth inhibition. Interacts with SPHK1, the interaction occurs in a calcium-dependent manner. Interacts with ITGA2B (via C-terminal cytoplasmic tail); the interaction occurs upon platelet aggregation and is stabilized/increased in a calcium and magnesium-dependent manner. Interacts with PAK1 (via N-terminal region); the interaction is direct and occurs in a calcium-dependent manner. Interacts with RAC3 (via C-terminal region); the interaction induces their association with the cytoskeleton upon alpha-IIb/beta3 integrin-mediated adhesion. Interacts with ITGA5 and ITGAV. Interacts with MYO1C. Interacts with ITGA2B (via C-terminal cytoplasmic tail region). Interacts (via C-terminal region) with PPP3R1; the interaction increases upon cardiomyocytes hypertrophy. Interacts with CACNA1C; the interaction increases upon cardiomyocytes hypertrophy. Interacts with TAS1R2 (via C-terminus); this interaction is independent of the myristoylation state of CIB1. Interacts and forms a complex with TMC6 and TMC8; the interaction stabilizes each component of the complex.

Its subcellular location is the membrane. It localises to the cell membrane. It is found in the sarcolemma. The protein localises to the apical cell membrane. The protein resides in the cell projection. Its subcellular location is the ruffle membrane. It localises to the filopodium tip. It is found in the growth cone. The protein localises to the lamellipodium. The protein resides in the cytoplasm. Its subcellular location is the cytoskeleton. It localises to the microtubule organizing center. It is found in the centrosome. The protein localises to the perinuclear region. The protein resides in the nucleus. Its subcellular location is the neuron projection. It localises to the perikaryon. In terms of biological role, calcium-binding protein that plays a role in the regulation of numerous cellular processes, such as cell differentiation, cell division, cell proliferation, cell migration, thrombosis, angiogenesis, cardiac hypertrophy and apoptosis. Involved in bone marrow megakaryocyte differentiation by negatively regulating thrombopoietin-mediated signaling pathway. Participates in the endomitotic cell cycle of megakaryocyte, a form of mitosis in which both karyokinesis and cytokinesis are interrupted. Plays a role in integrin signaling by negatively regulating alpha-IIb/beta3 activation in thrombin-stimulated megakaryocytes preventing platelet aggregation. Up-regulates PTK2/FAK1 activity, and is also needed for the recruitment of PTK2/FAK1 to focal adhesions; it thus appears to play an important role in focal adhesion formation. Positively regulates cell migration on fibronectin in a CDC42-dependent manner, the effect being negatively regulated by PAK1. Functions as a negative regulator of stress activated MAP kinase (MAPK) signaling pathways. Down-regulates inositol 1,4,5-trisphosphate receptor-dependent calcium signaling. Involved in sphingosine kinase SPHK1 translocation to the plasma membrane in a N-myristoylation-dependent manner preventing TNF-alpha-induced apoptosis. Regulates serine/threonine-protein kinase PLK3 activity for proper completion of cell division progression. Plays a role in microtubule (MT) dynamics during neuronal development; disrupts the MT depolymerization activity of STMN2 attenuating NGF-induced neurite outgrowth and the MT reorganization at the edge of lamellipodia. Promotes cardiomyocyte hypertrophy via activation of the calcineurin/NFAT signaling pathway. Stimulates calcineurin PPP3R1 activity by mediating its anchoring to the sarcolemma. In ischemia-induced (pathological or adaptive) angiogenesis, stimulates endothelial cell proliferation, migration and microvessel formation by activating the PAK1 and ERK1/ERK2 signaling pathway. Also promotes cancer cell survival and proliferation. May regulate cell cycle and differentiation of spermatogenic germ cells, and/or differentiation of supporting Sertoli cells. Forms a complex with TMC6/EVER1 and TMC8/EVER2 in lymphocytes and keratynocytes where CIB1 stabilizes TMC6 and TMC8 levels and reciprocally. In Bos taurus (Bovine), this protein is Calcium and integrin-binding protein 1 (CIB1).